The primary structure comprises 219 residues: Ras-related protein RABA5d (219 aa).

S2 bears the N-acetylserine mark. 19–26 serves as a coordination point for GTP; the sequence is GDSAVGKS. Residues 41-49 carry the Effector region motif; it reads SKATIGVEF. GTP contacts are provided by residues 67–71, 125–128, and 155–156; these read DTAGQ, NKCD, and SA. Residues C215 and C216 are each lipidated (S-geranylgeranyl cysteine).

This sequence belongs to the small GTPase superfamily. Rab family.

Its subcellular location is the cell membrane. Its function is as follows. Intracellular vesicle trafficking and protein transport. The polypeptide is Ras-related protein RABA5d (RABA5D) (Arabidopsis thaliana (Mouse-ear cress)).